A 679-amino-acid polypeptide reads, in one-letter code: Oxidant-induced cell-cycle arrest protein 5 (679 aa).

Residues glycine 50–arginine 441 form the Rab-GAP TBC domain. Positions asparagine 135–proline 153 are enriched in low complexity. Disordered stretches follow at residues asparagine 135–alanine 159, threonine 250–asparagine 271, and glutamine 524–serine 544. The span at glutamine 524–aspartate 539 shows a compositional bias: polar residues.

The protein belongs to the OCA5 family.

Its subcellular location is the cytoplasm. In terms of biological role, required for replication of brome mosaic virus (BMV), a positive-strand RNA virus. The chain is Oxidant-induced cell-cycle arrest protein 5 (OCA5) from Saccharomyces cerevisiae (strain RM11-1a) (Baker's yeast).